A 622-amino-acid chain; its full sequence is Microtubule-associated protein 70-1 (622 aa).

The segment at 1-27 (MSDVSADGGFLSAEQATTPVAIPTPYP) is disordered. A coiled-coil region spans residues 66-365 (DPVKVELNRL…LAISDRAAKS (300 aa)). Residues 250–483 (ILDRMHRQKV…YSFNKACDET (234 aa)) form a required for targeting to microtubules region. 2 disordered regions span residues 388–512 (SSIS…TEDN) and 579–622 (AAMR…RSTQ). Composition is skewed to polar residues over residues 400–425 (SMSN…SNGF) and 432–453 (MRNS…TSKS). 2 stretches are compositionally biased toward basic and acidic residues: residues 479 to 501 (ACDE…EKPP) and 579 to 591 (AAMR…DNRA). A coiled-coil region spans residues 541 to 590 (DKDDAIEMLAKKVETLTKAMEVEAKKMRREVAAMEKEVAAMRVDKDQDNR). The span at 594–605 (SSNTKPSSNTAQ) shows a compositional bias: polar residues.

This sequence belongs to the MAP70 family. As to quaternary structure, interacts with MAP70.5 and itself.

The protein localises to the cytoplasm. It is found in the cytoskeleton. The protein resides in the phragmoplast. Its subcellular location is the spindle. Functionally, plant-specific protein that interact with microtubules. In association with MAP70.5, is essential for the normal banding pattern of secondary cell wall and for the proper development of xylem tracheary elements and wood formation. This Arabidopsis thaliana (Mouse-ear cress) protein is Microtubule-associated protein 70-1 (MAP70.1).